The sequence spans 263 residues: 4-hydroxy-2-oxo-heptane-1,7-dioate aldolase (263 aa).

His-45 functions as the Proton acceptor in the catalytic mechanism. Substrate is bound at residue Gln-147. Glu-149 is an a divalent metal cation binding site. 2 residues coordinate substrate: Ala-174 and Asp-175. Asp-175 provides a ligand contact to a divalent metal cation.

It belongs to the HpcH/HpaI aldolase family. Homohexamer; trimer of dimers. A divalent metal cation is required as a cofactor.

The enzyme catalyses 4-hydroxy-2-oxoheptanedioate = succinate semialdehyde + pyruvate. It participates in aromatic compound metabolism; 4-hydroxyphenylacetate degradation; pyruvate and succinate semialdehyde from 4-hydroxyphenylacetate: step 7/7. In terms of biological role, catalyzes the reversible retro-aldol cleavage of 4-hydroxy-2-ketoheptane-1,7-dioate (HKHD) to pyruvate and succinic semialdehyde. In Salmonella choleraesuis (strain SC-B67), this protein is 4-hydroxy-2-oxo-heptane-1,7-dioate aldolase.